The chain runs to 286 residues: 4-diphosphocytidyl-2-C-methyl-D-erythritol kinase (286 aa).

Lys-12 is a catalytic residue. An ATP-binding site is contributed by 96–106; the sequence is PHGAGLGGGSA. Asp-138 is an active-site residue.

The protein belongs to the GHMP kinase family. IspE subfamily.

It carries out the reaction 4-CDP-2-C-methyl-D-erythritol + ATP = 4-CDP-2-C-methyl-D-erythritol 2-phosphate + ADP + H(+). The protein operates within isoprenoid biosynthesis; isopentenyl diphosphate biosynthesis via DXP pathway; isopentenyl diphosphate from 1-deoxy-D-xylulose 5-phosphate: step 3/6. Catalyzes the phosphorylation of the position 2 hydroxy group of 4-diphosphocytidyl-2C-methyl-D-erythritol. The protein is 4-diphosphocytidyl-2-C-methyl-D-erythritol kinase of Nitratidesulfovibrio vulgaris (strain ATCC 29579 / DSM 644 / CCUG 34227 / NCIMB 8303 / VKM B-1760 / Hildenborough) (Desulfovibrio vulgaris).